We begin with the raw amino-acid sequence, 86 residues long: Small ribosomal subunit protein bS18 (86 aa).

This sequence belongs to the bacterial ribosomal protein bS18 family. Part of the 30S ribosomal subunit. Forms a tight heterodimer with protein bS6.

In terms of biological role, binds as a heterodimer with protein bS6 to the central domain of the 16S rRNA, where it helps stabilize the platform of the 30S subunit. The chain is Small ribosomal subunit protein bS18 from Protochlamydia amoebophila (strain UWE25).